We begin with the raw amino-acid sequence, 293 residues long: ATP synthase gamma chain (293 aa).

The protein belongs to the ATPase gamma chain family. As to quaternary structure, F-type ATPases have 2 components, CF(1) - the catalytic core - and CF(0) - the membrane proton channel. CF(1) has five subunits: alpha(3), beta(3), gamma(1), delta(1), epsilon(1). CF(0) has three main subunits: a, b and c.

The protein resides in the cell inner membrane. Produces ATP from ADP in the presence of a proton gradient across the membrane. The gamma chain is believed to be important in regulating ATPase activity and the flow of protons through the CF(0) complex. The sequence is that of ATP synthase gamma chain from Leptothrix cholodnii (strain ATCC 51168 / LMG 8142 / SP-6) (Leptothrix discophora (strain SP-6)).